Consider the following 428-residue polypeptide: 3-phosphoshikimate 1-carboxyvinyltransferase (428 aa).

The 3-phosphoshikimate site is built by Lys-22, Ser-23, and Arg-27. Lys-22 is a binding site for phosphoenolpyruvate. Gly-96 and Arg-124 together coordinate phosphoenolpyruvate. 7 residues coordinate 3-phosphoshikimate: Ser-170, Ser-171, Gln-172, Ser-198, Asp-314, Asn-337, and Lys-341. Residue Gln-172 coordinates phosphoenolpyruvate. Asp-314 (proton acceptor) is an active-site residue. Residues Arg-345, Arg-387, and Lys-412 each coordinate phosphoenolpyruvate.

The protein belongs to the EPSP synthase family. As to quaternary structure, monomer.

The protein localises to the cytoplasm. The enzyme catalyses 3-phosphoshikimate + phosphoenolpyruvate = 5-O-(1-carboxyvinyl)-3-phosphoshikimate + phosphate. The protein operates within metabolic intermediate biosynthesis; chorismate biosynthesis; chorismate from D-erythrose 4-phosphate and phosphoenolpyruvate: step 6/7. Its function is as follows. Catalyzes the transfer of the enolpyruvyl moiety of phosphoenolpyruvate (PEP) to the 5-hydroxyl of shikimate-3-phosphate (S3P) to produce enolpyruvyl shikimate-3-phosphate and inorganic phosphate. This chain is 3-phosphoshikimate 1-carboxyvinyltransferase, found in Shewanella amazonensis (strain ATCC BAA-1098 / SB2B).